The primary structure comprises 55 residues: MAKEGPRIIVKMESTAGTGFYYTTTKNRRNTQAKLELRKYDPVAKKHVVFKEKKV.

It belongs to the bacterial ribosomal protein bL33 family.

This chain is Large ribosomal subunit protein bL33, found in Deinococcus geothermalis (strain DSM 11300 / CIP 105573 / AG-3a).